The chain runs to 362 residues: Anthranilate phosphoribosyltransferase (362 aa).

Residues Gly96, 99-100 (GD), Thr104, 106-109 (NIST), 124-132 (KHGNRAASS), and Gly136 each bind 5-phospho-alpha-D-ribose 1-diphosphate. Gly96 serves as a coordination point for anthranilate. Ser108 contributes to the Mg(2+) binding site. An anthranilate-binding site is contributed by Asn127. Arg182 provides a ligand contact to anthranilate. Asp240 and Glu241 together coordinate Mg(2+).

It belongs to the anthranilate phosphoribosyltransferase family. Homodimer. Mg(2+) is required as a cofactor.

The catalysed reaction is N-(5-phospho-beta-D-ribosyl)anthranilate + diphosphate = 5-phospho-alpha-D-ribose 1-diphosphate + anthranilate. The protein operates within amino-acid biosynthesis; L-tryptophan biosynthesis; L-tryptophan from chorismate: step 2/5. Catalyzes the transfer of the phosphoribosyl group of 5-phosphorylribose-1-pyrophosphate (PRPP) to anthranilate to yield N-(5'-phosphoribosyl)-anthranilate (PRA). In Rhodococcus opacus (strain B4), this protein is Anthranilate phosphoribosyltransferase.